Reading from the N-terminus, the 166-residue chain is Lipoprotein signal peptidase (166 aa).

4 helical membrane-spanning segments follow: residues 10-30 (GGAL…DQLT), 46-66 (LTPF…GFLA), 71-91 (WQRW…CYLL), and 100-120 (FSLS…DRLI). Active-site residues include Asp126 and Asp144. A helical transmembrane segment spans residues 135–155 (WHWPAFNLADSAITVGAVLLI).

Belongs to the peptidase A8 family.

It is found in the cell inner membrane. It catalyses the reaction Release of signal peptides from bacterial membrane prolipoproteins. Hydrolyzes -Xaa-Yaa-Zaa-|-(S,diacylglyceryl)Cys-, in which Xaa is hydrophobic (preferably Leu), and Yaa (Ala or Ser) and Zaa (Gly or Ala) have small, neutral side chains.. The protein operates within protein modification; lipoprotein biosynthesis (signal peptide cleavage). Functionally, this protein specifically catalyzes the removal of signal peptides from prolipoproteins. This Burkholderia thailandensis (strain ATCC 700388 / DSM 13276 / CCUG 48851 / CIP 106301 / E264) protein is Lipoprotein signal peptidase.